We begin with the raw amino-acid sequence, 223 residues long: Cytotoxic T-lymphocyte protein 4 (223 aa).

An N-terminal signal peptide occupies residues 1 to 35 (MACSGFQSHGAWLELTSRTWPCTALFSLLFIPVFS). Topologically, residues 38 to 161 (MHVAQPAVVL…IDPEPCPDSD (124 aa)) are extracellular. Positions 39-140 (HVAQPAVVLA…VELLYPPPYY (102 aa)) constitute an Ig-like V-type domain. The homodimerization stretch occupies residues 46–50 (VLANS). Cystine bridges form between Cys-58-Cys-129 and Cys-85-Cys-103. The N-linked (GlcNAc...) asparagine glycan is linked to Asn-113. The tract at residues 134–139 (LYPPPY) is important for interaction with CD80 and CD86. An N-linked (GlcNAc...) asparagine glycan is attached at Asn-145. A homodimerization region spans residues 150-155 (YVIDPE). The chain crosses the membrane as a helical span at residues 162 to 182 (FLLWILAAVSSGLFFYSFLIT). The Cytoplasmic portion of the chain corresponds to 183–223 (AVSLSKMLKKRSPLTTGVYVKMPPTEPECEKQFQPYFIPIN). Tyr-201 bears the Phosphotyrosine; by TXK and JAK2 mark.

In terms of assembly, homodimer; disulfide-linked. Binds to CD80/B7-1 and CD86/B7.2. Interacts with ICOSLG. N-glycosylation is important for dimerization. In terms of processing, phosphorylation at Tyr-201 prevents binding to the AP-2 adapter complex, blocks endocytosis, and leads to retention of CTLA4 on the cell surface.

It is found in the cell membrane. Functionally, inhibitory receptor acting as a major negative regulator of T-cell responses. The affinity of CTLA4 for its natural B7 family ligands, CD80 and CD86, is considerably stronger than the affinity of their cognate stimulatory coreceptor CD28. This is Cytotoxic T-lymphocyte protein 4 (CTLA4) from Sus scrofa (Pig).